The sequence spans 278 residues: Large ribosomal subunit protein uL2 (278 aa).

2 disordered regions span residues 32-57 (ALTEGKNKTGGRNNKGHRTSRGIGGG) and 221-278 (RGVA…KKKR). Positions 269 to 278 (IRSRHAKKKR) are enriched in basic residues.

The protein belongs to the universal ribosomal protein uL2 family. As to quaternary structure, part of the 50S ribosomal subunit. Forms a bridge to the 30S subunit in the 70S ribosome.

In terms of biological role, one of the primary rRNA binding proteins. Required for association of the 30S and 50S subunits to form the 70S ribosome, for tRNA binding and peptide bond formation. It has been suggested to have peptidyltransferase activity; this is somewhat controversial. Makes several contacts with the 16S rRNA in the 70S ribosome. The protein is Large ribosomal subunit protein uL2 of Zymomonas mobilis subsp. mobilis (strain ATCC 31821 / ZM4 / CP4).